Consider the following 192-residue polypeptide: Phosphoheptose isomerase (192 aa).

The 158-residue stretch at 35–192 (LIETLENQGK…CIERHFANKN (158 aa)) folds into the SIS domain. Residue 50-52 (NGG) coordinates substrate. Zn(2+)-binding residues include H59 and E63. Substrate contacts are provided by residues E63, 92–93 (ND), 118–120 (STS), S123, and Q170. Zn(2+) is bound by residues Q170 and H178.

This sequence belongs to the SIS family. GmhA subfamily. As to quaternary structure, homotetramer. Requires Zn(2+) as cofactor.

The protein resides in the cytoplasm. It catalyses the reaction 2 D-sedoheptulose 7-phosphate = D-glycero-alpha-D-manno-heptose 7-phosphate + D-glycero-beta-D-manno-heptose 7-phosphate. Its pathway is carbohydrate biosynthesis; D-glycero-D-manno-heptose 7-phosphate biosynthesis; D-glycero-alpha-D-manno-heptose 7-phosphate and D-glycero-beta-D-manno-heptose 7-phosphate from sedoheptulose 7-phosphate: step 1/1. Its function is as follows. Catalyzes the isomerization of sedoheptulose 7-phosphate in D-glycero-D-manno-heptose 7-phosphate. The chain is Phosphoheptose isomerase from Helicobacter pylori (strain Shi470).